A 346-amino-acid polypeptide reads, in one-letter code: GTPase Obg (346 aa).

The 159-residue stretch at 1–159 folds into the Obg domain; the sequence is MKFLDSAKIY…RTVLLRLKLI (159 aa). Residues 160–327 form the OBG-type G domain; sequence ADAGLVGLPN…ALRAVLAEID (168 aa). Residues 166–173, 191–195, 212–215, 279–282, and 308–310 contribute to the GTP site; these read GLPNAGKS, FTTLN, DIPG, SKVD, and SAA. The Mg(2+) site is built by S173 and T193.

Belongs to the TRAFAC class OBG-HflX-like GTPase superfamily. OBG GTPase family. In terms of assembly, monomer. Requires Mg(2+) as cofactor.

Its subcellular location is the cytoplasm. Functionally, an essential GTPase which binds GTP, GDP and possibly (p)ppGpp with moderate affinity, with high nucleotide exchange rates and a fairly low GTP hydrolysis rate. Plays a role in control of the cell cycle, stress response, ribosome biogenesis and in those bacteria that undergo differentiation, in morphogenesis control. This Methylocella silvestris (strain DSM 15510 / CIP 108128 / LMG 27833 / NCIMB 13906 / BL2) protein is GTPase Obg.